The chain runs to 312 residues: tRNA dimethylallyltransferase (312 aa).

An ATP-binding site is contributed by 13 to 20; it reads GPTAVGKT. A substrate-binding site is contributed by 15–20; that stretch reads TAVGKT. 2 interaction with substrate tRNA regions span residues 38 to 41 and 163 to 167; these read DSVQ and QRVVR.

It belongs to the IPP transferase family. Monomer. Mg(2+) serves as cofactor.

It carries out the reaction adenosine(37) in tRNA + dimethylallyl diphosphate = N(6)-dimethylallyladenosine(37) in tRNA + diphosphate. In terms of biological role, catalyzes the transfer of a dimethylallyl group onto the adenine at position 37 in tRNAs that read codons beginning with uridine, leading to the formation of N6-(dimethylallyl)adenosine (i(6)A). This is tRNA dimethylallyltransferase from Exiguobacterium sibiricum (strain DSM 17290 / CCUG 55495 / CIP 109462 / JCM 13490 / 255-15).